The sequence spans 681 residues: PTS system glucose-specific EIICBA component (681 aa).

The PTS EIIC type-1 domain occupies 3–414; sequence KKLFGQLQRI…LKYKTPGRED (412 aa). 10 helical membrane-spanning segments follow: residues 16-36, 73-93, 126-146, 170-190, 199-219, 273-293, 303-323, 328-348, 355-375, and 383-403; these read LMLP…GTAM, MIFA…AAIA, ILGI…GALA, FVPI…ALIW, AFST…FGFI, FMQG…LAIY, VVAG…ITEP, FLFV…LSFL, LHLG…GILP, and VIPV…FLIV. Residues 425-506 form the PTS EIIB type-1 domain; sequence TELPYAVLEA…QQIMNGQVVE (82 aa). Residue C447 is the Phosphocysteine intermediate; for EIIB activity of the active site. One can recognise a PTS EIIA type-1 domain in the interval 551-655; the sequence is DQVFSEKMMG…SDITPIIVTQ (105 aa). Residue H603 is the Tele-phosphohistidine intermediate; for EIIA activity of the active site.

The protein resides in the cell membrane. It carries out the reaction N(pros)-phospho-L-histidyl-[protein] + D-glucose(out) = D-glucose 6-phosphate(in) + L-histidyl-[protein]. The phosphoenolpyruvate-dependent sugar phosphotransferase system (sugar PTS), a major carbohydrate active transport system, catalyzes the phosphorylation of incoming sugar substrates concomitantly with their translocation across the cell membrane. This system is involved in glucose transport. This is PTS system glucose-specific EIICBA component (ptsG) from Staphylococcus aureus (strain NCTC 8325 / PS 47).